Reading from the N-terminus, the 148-residue chain is Thioredoxin H8 (148 aa).

One can recognise a Thioredoxin domain in the interval 1–145; the sequence is MGANVSTPDQ…LERKLNKYTQ (145 aa). Catalysis depends on nucleophile residues C71 and C74. A disulfide bridge links C71 with C74.

Belongs to the thioredoxin family. Plant H-type subfamily.

Its subcellular location is the cytoplasm. Its function is as follows. Probable thiol-disulfide oxidoreductase that may be involved in the redox regulation of a number of cytosolic enzymes. This is Thioredoxin H8 (TRX8) from Arabidopsis thaliana (Mouse-ear cress).